Reading from the N-terminus, the 729-residue chain is Phosphoribosylformylglycinamidine synthase subunit PurL (729 aa).

His42 is an active-site residue. Positions 45 and 84 each coordinate ATP. Residue Glu86 participates in Mg(2+) binding. Residues 87–90 (SHNH) and Arg109 each bind substrate. His88 (proton acceptor) is an active-site residue. Asp110 serves as a coordination point for Mg(2+). Gln238 is a substrate binding site. A Mg(2+)-binding site is contributed by Asp266. 310–312 (ESQ) contacts substrate. The ATP site is built by Asp492 and Gly529. Position 530 (Asn530) interacts with Mg(2+). Ser532 provides a ligand contact to substrate.

This sequence belongs to the FGAMS family. Monomer. Part of the FGAM synthase complex composed of 1 PurL, 1 PurQ and 2 PurS subunits.

The protein resides in the cytoplasm. The catalysed reaction is N(2)-formyl-N(1)-(5-phospho-beta-D-ribosyl)glycinamide + L-glutamine + ATP + H2O = 2-formamido-N(1)-(5-O-phospho-beta-D-ribosyl)acetamidine + L-glutamate + ADP + phosphate + H(+). It participates in purine metabolism; IMP biosynthesis via de novo pathway; 5-amino-1-(5-phospho-D-ribosyl)imidazole from N(2)-formyl-N(1)-(5-phospho-D-ribosyl)glycinamide: step 1/2. In terms of biological role, part of the phosphoribosylformylglycinamidine synthase complex involved in the purines biosynthetic pathway. Catalyzes the ATP-dependent conversion of formylglycinamide ribonucleotide (FGAR) and glutamine to yield formylglycinamidine ribonucleotide (FGAM) and glutamate. The FGAM synthase complex is composed of three subunits. PurQ produces an ammonia molecule by converting glutamine to glutamate. PurL transfers the ammonia molecule to FGAR to form FGAM in an ATP-dependent manner. PurS interacts with PurQ and PurL and is thought to assist in the transfer of the ammonia molecule from PurQ to PurL. The protein is Phosphoribosylformylglycinamidine synthase subunit PurL of Campylobacter curvus (strain 525.92).